Consider the following 242-residue polypeptide: Glucosamine-6-phosphate deaminase (242 aa).

Aspartate 71 acts as the Proton acceptor; for enolization step in catalysis. The active-site For ring-opening step is asparagine 142. Histidine 144 functions as the Proton acceptor; for ring-opening step in the catalytic mechanism. Catalysis depends on glutamate 149, which acts as the For ring-opening step.

This sequence belongs to the glucosamine/galactosamine-6-phosphate isomerase family. NagB subfamily.

It catalyses the reaction alpha-D-glucosamine 6-phosphate + H2O = beta-D-fructose 6-phosphate + NH4(+). It functions in the pathway amino-sugar metabolism; N-acetylneuraminate degradation; D-fructose 6-phosphate from N-acetylneuraminate: step 5/5. Its function is as follows. Catalyzes the reversible isomerization-deamination of glucosamine 6-phosphate (GlcN6P) to form fructose 6-phosphate (Fru6P) and ammonium ion. The chain is Glucosamine-6-phosphate deaminase from Malacoplasma penetrans (strain HF-2) (Mycoplasma penetrans).